A 99-amino-acid chain; its full sequence is NADH-ubiquinone oxidoreductase chain 4L (99 aa).

The next 3 helical transmembrane spans lie at 1-21 (MTIYSYLLLLCMVMFVTFFTQ), 25-45 (ILSLMVVLESLMLITLSSVAV), and 56-76 (VMILLLCFAAAEAALSLSLLV).

This sequence belongs to the complex I subunit 4L family.

Its subcellular location is the mitochondrion membrane. It catalyses the reaction a ubiquinone + NADH + 5 H(+)(in) = a ubiquinol + NAD(+) + 4 H(+)(out). Core subunit of the mitochondrial membrane respiratory chain NADH dehydrogenase (Complex I) that is believed to belong to the minimal assembly required for catalysis. Complex I functions in the transfer of electrons from NADH to the respiratory chain. The immediate electron acceptor for the enzyme is believed to be ubiquinone. This is NADH-ubiquinone oxidoreductase chain 4L (ND4L) from Albinaria caerulea (Land snail).